The chain runs to 158 residues: SsrA-binding protein (158 aa).

The protein belongs to the SmpB family.

It localises to the cytoplasm. Required for rescue of stalled ribosomes mediated by trans-translation. Binds to transfer-messenger RNA (tmRNA), required for stable association of tmRNA with ribosomes. tmRNA and SmpB together mimic tRNA shape, replacing the anticodon stem-loop with SmpB. tmRNA is encoded by the ssrA gene; the 2 termini fold to resemble tRNA(Ala) and it encodes a 'tag peptide', a short internal open reading frame. During trans-translation Ala-aminoacylated tmRNA acts like a tRNA, entering the A-site of stalled ribosomes, displacing the stalled mRNA. The ribosome then switches to translate the ORF on the tmRNA; the nascent peptide is terminated with the 'tag peptide' encoded by the tmRNA and targeted for degradation. The ribosome is freed to recommence translation, which seems to be the essential function of trans-translation. The chain is SsrA-binding protein from Chloroflexus aggregans (strain MD-66 / DSM 9485).